The following is an 872-amino-acid chain: Sine oculis-binding protein homolog (872 aa).

Residues 1–14 (MAEMEKEGRPPENK) are compositionally biased toward basic and acidic residues. A disordered region spans residues 1-26 (MAEMEKEGRPPENKRSRKPAHPVKRE). FCS-type zinc fingers lie at residues 142–180 (DDVS…KCFA) and 216–256 (FKNN…KCLN). Disordered regions lie at residues 308 to 354 (RRKA…KSMP), 411 to 484 (FIRG…PGAP), and 550 to 619 (KPPN…GRSE). The span at 319-344 (GQSQGPGPSASTTVSPSDTANCSVTK) shows a compositional bias: polar residues. The span at 417–433 (HHASNPNSPLSNPMLPG) shows a compositional bias: low complexity. Over residues 460 to 484 (IHPPSTPTMPGNPPGLLPPPPPGAP) the composition is skewed to pro residues. The SUMO interaction motif 1 (SIM); mediates the binding to polysumoylated substrates motif lies at 620–624 (VVDLT). The residue at position 629 (S629) is a Phosphoserine. The SUMO interaction motif 2 (SIM); mediates the binding to polysumoylated substrates motif lies at 651-655 (VIDLT). A Glycyl lysine isopeptide (Lys-Gly) (interchain with G-Cter in SUMO2) cross-link involves residue K675. S697 carries the post-translational modification Phosphoserine. Residues 728–770 (AAEGAKGAEPPPEQPPPPPPPPPAPPKKLLSPEEPAVSELESV) form a disordered region. Positions 736–753 (EPPPEQPPPPPPPPPAPP) are enriched in pro residues.

The protein belongs to the SOBP family. In terms of assembly, interacts (via SIM domains) with SUMO1 and SUMO2.

Functionally, implicated in development of the cochlea. This is Sine oculis-binding protein homolog from Bos taurus (Bovine).